We begin with the raw amino-acid sequence, 606 residues long: Serine/threonine-protein kinase A-Raf (606 aa).

The RBD domain occupies 19–91 (GTVKVYLPNK…DGEELIVEVL (73 aa)). The Phorbol-ester/DAG-type zinc finger occupies 98–144 (MHNFVRKTFFSLAFCDFCLKFLFHGFRCQTCGYKFHQHCSSKVPTVC). 8 residues coordinate Zn(2+): His99, Cys112, Cys115, Cys125, Cys128, His133, Cys136, and Cys144. Phosphoserine is present on residues Ser157 and Ser162. Residues 160-207 (DLSGGSRQHEAPSNRPLNELLTPQGPSPRTQHCDPEHFPFPAPANAPL) are disordered. Position 181 is a phosphothreonine (Thr181). Phosphoserine occurs at positions 186 and 214. Residues 240-290 (STDAAGSRGGSDGTPRGSPSPASVSSGRKSPHSKSPAEQRERKSLADDKKK) are disordered. The residue at position 253 (Thr253) is a Phosphothreonine. Phosphoserine occurs at positions 257 and 269. Residues 274-289 (SPAEQRERKSLADDKK) show a composition bias toward basic and acidic residues. A Protein kinase domain is found at 310–570 (VQLLKRIGTG…PQILATIELL (261 aa)). Residues 316–324 (IGTGSFGTV) and Lys336 contribute to the ATP site. A Phosphothreonine modification is found at Thr318. Catalysis depends on Asp429, which acts as the Proton acceptor.

The protein belongs to the protein kinase superfamily. TKL Ser/Thr protein kinase family. RAF subfamily. In terms of assembly, interacts with TH1L/NELFD. The cofactor is Zn(2+). Dephosphorylation of Ser-214 by the SHOC2-MRAS-PP1c (SMP) complex consisting of SHOC2, GTP-bound M-Ras/MRAS and the catalytic subunit of protein phosphatase 1 (PPP1CA, PPP1CB or PPP1CC); this relieves inactivation and stimulates kinase activity. In terms of tissue distribution, predominantly in urogenital tissues.

It carries out the reaction L-seryl-[protein] + ATP = O-phospho-L-seryl-[protein] + ADP + H(+). The enzyme catalyses L-threonyl-[protein] + ATP = O-phospho-L-threonyl-[protein] + ADP + H(+). Functionally, involved in the transduction of mitogenic signals from the cell membrane to the nucleus. May also regulate the TOR signaling cascade. Phosphorylates PFKFB2. Serves as a positive regulator of myogenic differentiation by inducing cell cycle arrest, the expression of myogenin and other muscle-specific proteins, and myotube formation. The protein is Serine/threonine-protein kinase A-Raf (ARAF) of Homo sapiens (Human).